Reading from the N-terminus, the 89-residue chain is MAKKSKIAKYQKQLQLIEQYADLRRDLKAKGDYESLRKLPRDSNPNRLKNRDKIDGRPHAYMRKFGVSRINFRDLAHKGQLPGVTKASW.

Positions 34–54 (ESLRKLPRDSNPNRLKNRDKI) are disordered.

This sequence belongs to the universal ribosomal protein uS14 family. In terms of assembly, part of the 30S ribosomal subunit. Contacts proteins S3 and S10.

Binds 16S rRNA, required for the assembly of 30S particles and may also be responsible for determining the conformation of the 16S rRNA at the A site. This is Small ribosomal subunit protein uS14A from Streptococcus pyogenes serotype M1.